The primary structure comprises 351 residues: Protein Tex24 (351 aa).

3 disordered regions span residues 69-101 (PSTAHGKRKPGHLPRLRSSAVKGHAPDPNPSLS), 117-144 (PEDRQTFVGPSGLPKISPKATAGEAQGK), and 275-298 (EKVKPSSHDMHLSTAERSFKPKSM). Positions 73–83 (HGKRKPGHLPR) are enriched in basic residues. Over residues 275 to 285 (EKVKPSSHDMH) the composition is skewed to basic and acidic residues.

In terms of tissue distribution, specific to testis, where it is expressed in spermatogonia.

It is found in the nucleus. Nuclear factor which might have a role in spermatogenesis. This Mus musculus (Mouse) protein is Protein Tex24.